We begin with the raw amino-acid sequence, 706 residues long: Envelope glycoprotein H (706 aa).

The first 18 residues, 1-18 (MQLLCVFCLVLLWEVGAA), serve as a signal peptide directing secretion. Residues 19–682 (SLSEVKLHLD…LYEERAHVVL (664 aa)) lie on the Virion surface side of the membrane. Asn-60 carries N-linked (GlcNAc...) asparagine; by host glycosylation. Residues 165-229 (DKFQYTGAMT…QSGDYSLVIV (65 aa)) are interaction with gL. A disulfide bridge links Cys-278 with Cys-335. A glycan (N-linked (GlcNAc...) asparagine; by host) is linked at Asn-435. 2 disulfides stabilise this stretch: Cys-454-Cys-478 and Cys-534-Cys-587. 2 N-linked (GlcNAc...) asparagine; by host glycosylation sites follow: Asn-549 and Asn-604. A disulfide bond links Cys-612 and Cys-615. N-linked (GlcNAc...) asparagine; by host glycosylation is present at Asn-664. A helical transmembrane segment spans residues 683–703 (AIILYFIAFALGIFLVHKIVM). At 704–706 (FFL) the chain is on the intravirion side.

Belongs to the herpesviridae glycoprotein H family. Interacts with glycoprotein L (gL); this interaction is necessary for the correct processing and cell surface expression of gH. The heterodimer gH/gL seems to interact with gB trimers during fusion. The heterodimer gH/gL interacts with host EPHA2 to facilitate virus internalization and fusion. Interacts with glycoprotein 42/BZLF2. In terms of processing, N-glycosylated, O-glycosylated, and sialylated.

Its subcellular location is the virion membrane. It localises to the host cell membrane. The protein localises to the host endosome membrane. Its function is as follows. The heterodimer glycoprotein H-glycoprotein L is required for the fusion of viral and plasma membranes leading to virus entry into the host cell. Following initial binding to host receptor, membrane fusion is mediated by the fusion machinery composed of gB and the heterodimer gH/gL. May also be involved in the fusion between the virion envelope and the outer nuclear membrane during virion morphogenesis. The heterodimer gH/gL targets also host EPHA2 to promote viral entry. The polypeptide is Envelope glycoprotein H (Homo sapiens (Human)).